The chain runs to 657 residues: Knob-associated histidine-rich protein (657 aa).

The signal sequence occupies residues 1–34 (MKSFKNKNTLRRKKAFPVFTKILLVSFLVWVLKC). The N-linked (GlcNAc...) asparagine glycan is linked to asparagine 42. Residues 57-76 (AQKQHEHHHHHHHHHHHQHQ) are compositionally biased toward basic residues. Disordered regions lie at residues 57-138 (AQKQ…PSNE), 282-301 (AHDG…SEGY), and 352-657 (VNKY…GCCG). Over residues 99 to 108 (PQVHQQVHGQ) the composition is skewed to low complexity. Residues 112-123 (HHHHHHHHHHLH) show a composition bias toward basic residues. Basic and acidic residues-rich tracts occupy residues 357–378 (KHGD…EGEK) and 399–408 (KDNEDAESVK). Residues 409–425 (SKKHKSHDCEKKKSKKH) show a composition bias toward basic residues. Over residues 426–435 (KDNEDAESVK) the composition is skewed to basic and acidic residues. A compositionally biased stretch (basic residues) spans 453–468 (AAKKLTKKIKIKKKTN). Positions 473 to 496 (DGSKAHEKKENETKNTAGENKKVD) are enriched in basic and acidic residues. Positions 497–508 (STSADNKSTNAA) are enriched in polar residues. Basic and acidic residues-rich tracts occupy residues 512–523 (AKDKTQGGKTDK) and 551–578 (STSK…EATK). Positions 590–614 (ASTTEGATKGASTTAGSTTGATTGA) are enriched in low complexity. Residues 628–643 (AANNGEQVMSRGQAQL) are compositionally biased toward polar residues. The span at 648 to 657 (KKKKKRGCCG) shows a compositional bias: basic residues.

It localises to the secreted. Functionally, KAHRP might mimick human histidine-rich glycoproteins to anchor host thrombospondin or a parasite analog in a binding complex with the endothelial cell receptor. The chain is Knob-associated histidine-rich protein (SD17) from Plasmodium falciparum (isolate NF7 / Ghana).